The following is a 156-amino-acid chain: SsrA-binding protein (156 aa).

Belongs to the SmpB family.

It localises to the cytoplasm. Functionally, required for rescue of stalled ribosomes mediated by trans-translation. Binds to transfer-messenger RNA (tmRNA), required for stable association of tmRNA with ribosomes. tmRNA and SmpB together mimic tRNA shape, replacing the anticodon stem-loop with SmpB. tmRNA is encoded by the ssrA gene; the 2 termini fold to resemble tRNA(Ala) and it encodes a 'tag peptide', a short internal open reading frame. During trans-translation Ala-aminoacylated tmRNA acts like a tRNA, entering the A-site of stalled ribosomes, displacing the stalled mRNA. The ribosome then switches to translate the ORF on the tmRNA; the nascent peptide is terminated with the 'tag peptide' encoded by the tmRNA and targeted for degradation. The ribosome is freed to recommence translation, which seems to be the essential function of trans-translation. This is SsrA-binding protein from Renibacterium salmoninarum (strain ATCC 33209 / DSM 20767 / JCM 11484 / NBRC 15589 / NCIMB 2235).